Here is a 45-residue protein sequence, read N- to C-terminus: Photosystem II reaction center protein K (45 aa).

The propeptide occupies 1–8 (MEAVLLLA). The chain crosses the membrane as a helical span at residues 24–44 (MPVIPLFFLALAFVWQAAVGF).

It belongs to the PsbK family. In terms of assembly, PSII is composed of 1 copy each of membrane proteins PsbA, PsbB, PsbC, PsbD, PsbE, PsbF, PsbH, PsbI, PsbJ, PsbK, PsbL, PsbM, PsbT, PsbX, PsbY, PsbZ, Psb30/Ycf12, peripheral proteins PsbO, CyanoQ (PsbQ), PsbU, PsbV and a large number of cofactors. It forms dimeric complexes.

It is found in the cellular thylakoid membrane. Its function is as follows. One of the components of the core complex of photosystem II (PSII). PSII is a light-driven water:plastoquinone oxidoreductase that uses light energy to abstract electrons from H(2)O, generating O(2) and a proton gradient subsequently used for ATP formation. It consists of a core antenna complex that captures photons, and an electron transfer chain that converts photonic excitation into a charge separation. The protein is Photosystem II reaction center protein K of Acaryochloris marina (strain MBIC 11017).